The primary structure comprises 457 residues: MFDPKYLESGEFYQRRYRNFPTLIIVPIFLLVVFIVLFSLFAKREIVVKASGEIIPAKVLSDIQSTSNNAIDSNQLAENKMVKKGDTLVTFTSGNEKISSQLLTQQINNLNNRIQSLDTYKHSIIDGRSEFGGTDQFGYDNLFNGYMAQVDTLTSEFNQQNSDKQTADQQANHQIDVLKQGQSKNNQQLANYQAILTSINSNTKPTNNPYQSIYDNYAAQLKSAQTTDDKEQVKQTALSSVQQQIDQLQTTSSSYDSQIAGITKSGPLSQSSTLDKIADLKQQQLASAQKEINDQQQSLDELKAKQSSANEDYQDTVIKAPESGILHLTSDKATIKYFPKGTTVTQIYPMLNKRTKLSVEYYVPTSNSVGLKRGQNIRFVANQNVTKPLILTGTIKTISSAPIIIKEESFYKCIASINVNVREHEQIKYGLAGKVTTTKGTKTWFNYYKDILLGNTN.

The helical transmembrane segment at 22-42 (TLIIVPIFLLVVFIVLFSLFA) threads the bilayer.

This sequence belongs to the membrane fusion protein (MFP) (TC 8.A.1) family.

It localises to the membrane. Its function is as follows. Involved in the secretion of mesentericin Y105. In Leuconostoc mesenteroides, this protein is Mesentericin Y105 secretion protein MesE (mesE).